The following is an 80-amino-acid chain: Kunitz-type serine protease inhibitor LmKTT-1a (80 aa).

Residues 1–21 (MKSFLLIALVLFFLFVSYASA) form the signal peptide. The 51-residue stretch at 25 to 75 (CQLPSDVGKGKASFTRYYYNEESGKCETFIYGGVGGNSNNFLTKEDCCREC) folds into the BPTI/Kunitz inhibitor domain. Intrachain disulfides connect C25-C75, C50-C71, and C72-C80.

The protein belongs to the venom Kunitz-type family. Scorpion delta-Ktx subfamily. Delta-Ktx 2 sub-subfamily. Lacks the conserved CysII-CysIV disulfide bond but contains 2 cysteine residues at the C-terminus that generate a new disulfide bond. In terms of tissue distribution, expressed by the venom gland.

The protein localises to the secreted. Its function is as follows. Serine protease inhibitor that inhibits trypsin at a molar ratio of 1:1 (Ki=140 nM). This chain is Kunitz-type serine protease inhibitor LmKTT-1a, found in Lychas mucronatus (Chinese swimming scorpion).